The primary structure comprises 448 residues: Divalent metal cation transporter MntH (448 aa).

11 helical membrane-spanning segments follow: residues 41–61 (LFAF…PGNW), 69–89 (SEFG…AVLL), 117–137 (GFVL…AEVI), 147–167 (FGIP…LVLF), 176–196 (IEVI…AEMV), 215–235 (IVTN…TVMP), 270–290 (FSLT…AAAF), 307–327 (LLNP…ALLA), 363–383 (VLAI…GINE), 384–404 (LLIF…IPLV), and 424–444 (IISW…LFYT).

The protein belongs to the NRAMP family.

The protein resides in the cell membrane. In terms of biological role, h(+)-stimulated, divalent metal cation uptake system. In Listeria welshimeri serovar 6b (strain ATCC 35897 / DSM 20650 / CCUG 15529 / CIP 8149 / NCTC 11857 / SLCC 5334 / V8), this protein is Divalent metal cation transporter MntH.